A 240-amino-acid polypeptide reads, in one-letter code: NKG2-E type II integral membrane protein (240 aa).

The span at 1-12 (MSKQRGTFSEVS) shows a compositional bias: polar residues. Residues 1-31 (MSKQRGTFSEVSLAQDPKWQQRKPKGNKSSI) form a disordered region. The Cytoplasmic portion of the chain corresponds to 1–70 (MSKQRGTFSE…CQGLLPPPEK (70 aa)). A helical; Signal-anchor for type II membrane protein membrane pass occupies residues 71–93 (LTAEVLGIICIVLMATVLKTIVL). Residues 94 to 240 (IPFLEQNNSS…IMLTRLVLNS (147 aa)) are Extracellular-facing. N-linked (GlcNAc...) asparagine glycosylation occurs at Asn100. In terms of domain architecture, C-type lectin spans 116–230 (HCPEEWITYS…GSSRIIRRGF (115 aa)). An intrachain disulfide couples Cys117 to Cys128. Asn149 and Asn179 each carry an N-linked (GlcNAc...) asparagine glycan. The cysteines at positions 207 and 220 are disulfide-linked.

Can form disulfide-bonded heterodimer with CD94. Natural killer cells.

The protein localises to the membrane. Plays a role as a receptor for the recognition of MHC class I HLA-E molecules by NK cells and some cytotoxic T-cells. In Homo sapiens (Human), this protein is NKG2-E type II integral membrane protein (KLRC3).